The primary structure comprises 150 residues: Large ribosomal subunit protein uL13 (150 aa).

The tract at residues 127 to 150 (KGTEHPHSAQKPQPLQLNPSATAK) is disordered. Polar residues predominate over residues 136 to 150 (QKPQPLQLNPSATAK).

This sequence belongs to the universal ribosomal protein uL13 family. As to quaternary structure, part of the 50S ribosomal subunit.

Functionally, this protein is one of the early assembly proteins of the 50S ribosomal subunit, although it is not seen to bind rRNA by itself. It is important during the early stages of 50S assembly. In Synechococcus sp. (strain CC9902), this protein is Large ribosomal subunit protein uL13.